Consider the following 720-residue polypeptide: Protein unc-112 (720 aa).

Disordered stretches follow at residues 145–170 and 210–236; these read DLRRGTSDADNMNGPLSMRPGEESVG and MGTLPRHGTLPRGVSPSPGAYNDTMRR. Positions 288 to 614 constitute an FERM domain; sequence WLDSSRSLME…ALPEHGIHYF (327 aa). One can recognise a PH domain in the interval 402 to 507; sequence VPELADYLKY…WMAACRLASR (106 aa).

It belongs to the kindlin family. Interacts with pat-4/ILK. Probably forms a complex with pat-4 and pat-6. Component of an integrin containing attachment complex, composed of at least pat-2, pat-3, pat-4, pat-6, unc-52, unc-97 and unc-112. As to expression, mainly expressed in muscle cells in both embryos and adults.

The protein resides in the cell membrane. Its subcellular location is the cytoplasm. It is found in the myofibril. The protein localises to the sarcomere. It localises to the m line. Its function is as follows. Component of an integrin containing attachment complex, which is required for muscle development and maintenance. Probable regulator of cell-extracellular matrix adhesion. Required during initial muscle assembly to form dense bodies and M-lines. This Caenorhabditis elegans protein is Protein unc-112.